Reading from the N-terminus, the 38-residue chain is Photosystem II reaction center protein L (38 aa).

The chain crosses the membrane as a helical span at residues 17-37 (SLYWGLLLIFVLAVLFSNYSF).

Belongs to the PsbL family. As to quaternary structure, PSII is composed of 1 copy each of membrane proteins PsbA, PsbB, PsbC, PsbD, PsbE, PsbF, PsbH, PsbI, PsbJ, PsbK, PsbL, PsbM, PsbT, PsbX, PsbY, PsbZ, Psb30/Ycf12, at least 3 peripheral proteins of the oxygen-evolving complex and a large number of cofactors. It forms dimeric complexes.

Its subcellular location is the plastid. The protein localises to the chloroplast thylakoid membrane. Functionally, one of the components of the core complex of photosystem II (PSII). PSII is a light-driven water:plastoquinone oxidoreductase that uses light energy to abstract electrons from H(2)O, generating O(2) and a proton gradient subsequently used for ATP formation. It consists of a core antenna complex that captures photons, and an electron transfer chain that converts photonic excitation into a charge separation. This subunit is found at the monomer-monomer interface and is required for correct PSII assembly and/or dimerization. The polypeptide is Photosystem II reaction center protein L (Bowenia serrulata (Byfield fern)).